Consider the following 961-residue polypeptide: Outer capsid protein VP2 (961 aa).

This sequence belongs to the orbivirus VP2 family.

It localises to the virion. The VP2 protein is one of the two proteins (with VP5) target of the host immunogenic response. Responsible for viral which constitute the virus particle outer capsid. It is the major attachment to target host cell, probably by binding to sialic acid. This attachment induces virion internalization predominantly through clathrin-dependent endocytosis. In Bluetongue virus 1 (isolate South Africa) (BTV 1), this protein is Outer capsid protein VP2 (Segment-2).